Consider the following 245-residue polypeptide: Acetylglutamate kinase (245 aa).

Residues 41-42, Arg63, and Asn156 contribute to the substrate site; that span reads GG.

This sequence belongs to the acetylglutamate kinase family. ArgB subfamily.

The protein resides in the cytoplasm. The catalysed reaction is N-acetyl-L-glutamate + ATP = N-acetyl-L-glutamyl 5-phosphate + ADP. It functions in the pathway amino-acid biosynthesis; L-arginine biosynthesis; N(2)-acetyl-L-ornithine from L-glutamate: step 2/4. Its function is as follows. Catalyzes the ATP-dependent phosphorylation of N-acetyl-L-glutamate. The sequence is that of Acetylglutamate kinase from Streptococcus gordonii (strain Challis / ATCC 35105 / BCRC 15272 / CH1 / DL1 / V288).